A 382-amino-acid polypeptide reads, in one-letter code: Dual-specificity RNA methyltransferase RlmN (382 aa).

The active-site Proton acceptor is E113. One can recognise a Radical SAM core domain in the interval 119 to 358 (EINRATLCIS…TTIRKQRGID (240 aa)). A disulfide bridge links C126 with C363. Residues C133, C137, and C140 each coordinate [4Fe-4S] cluster. S-adenosyl-L-methionine is bound by residues 187 to 188 (GE), S219, 241 to 243 (SLH), and N320. C363 acts as the S-methylcysteine intermediate in catalysis.

This sequence belongs to the radical SAM superfamily. RlmN family. [4Fe-4S] cluster is required as a cofactor.

It localises to the cytoplasm. The catalysed reaction is adenosine(2503) in 23S rRNA + 2 reduced [2Fe-2S]-[ferredoxin] + 2 S-adenosyl-L-methionine = 2-methyladenosine(2503) in 23S rRNA + 5'-deoxyadenosine + L-methionine + 2 oxidized [2Fe-2S]-[ferredoxin] + S-adenosyl-L-homocysteine. The enzyme catalyses adenosine(37) in tRNA + 2 reduced [2Fe-2S]-[ferredoxin] + 2 S-adenosyl-L-methionine = 2-methyladenosine(37) in tRNA + 5'-deoxyadenosine + L-methionine + 2 oxidized [2Fe-2S]-[ferredoxin] + S-adenosyl-L-homocysteine. Specifically methylates position 2 of adenine 2503 in 23S rRNA and position 2 of adenine 37 in tRNAs. m2A2503 modification seems to play a crucial role in the proofreading step occurring at the peptidyl transferase center and thus would serve to optimize ribosomal fidelity. The sequence is that of Dual-specificity RNA methyltransferase RlmN from Wigglesworthia glossinidia brevipalpis.